A 231-amino-acid chain; its full sequence is MKVTNLSEKEERGGELTEAEKEELRKSEKGAIIELLVPVDTYLSAGVHIGTHSCTKYMESFVYRVRAEGLYVLDVRKIDERLRIAAKFLSRYDPQDIIVVASRPYAYRPVQKFAEVVGSRALVGRIIPGTFTNPYLSTYIEPKVLLVSDPRTDTQAIKEAAKVGIPIVAFADTDAKIDYIDLIIPANNKGRKSLALLYWALARQILRERRVIPPDGDLAVPVSEFEMRLVQ.

Residues 1-23 are disordered; that stretch reads MKVTNLSEKEERGGELTEAEKEE. Positions 7-23 are enriched in basic and acidic residues; that stretch reads SEKEERGGELTEAEKEE.

This sequence belongs to the universal ribosomal protein uS2 family.

The sequence is that of Small ribosomal subunit protein uS2 (rps2) from Saccharolobus solfataricus (strain ATCC 35092 / DSM 1617 / JCM 11322 / P2) (Sulfolobus solfataricus).